Reading from the N-terminus, the 190-residue chain is Tereporin-Ca1 (190 aa).

Residues 2-21 (TAGSSLAGTTLSGLAASGYR) form an N-terminal region region. Phosphocholine contacts are provided by Gly-78, Ser-96, Pro-98, Tyr-131, and Tyr-132. The short motif at 138–140 (KGE) is the Cell attachment site, crucial for protein stability element.

This sequence belongs to the actinoporin family. Conoidea subfamily. As to quaternary structure, octamer or nonamer in membranes. Monomer in the soluble state. In terms of tissue distribution, expressed by the venom duct.

It localises to the secreted. The protein localises to the nematocyst. It is found in the target cell membrane. In terms of biological role, pore-forming protein that forms pores of around 1 nm and causes cardiac stimulation and cytolysis. The sequence is that of Tereporin-Ca1 from Terebra anilis (Auger snail).